Consider the following 213-residue polypeptide: Translation initiation factor IF-3 (213 aa).

Residues 193–213 (EKIASLPPLPPDNSGEPEDDE) are disordered.

Belongs to the IF-3 family. In terms of assembly, monomer.

The protein resides in the cytoplasm. Functionally, IF-3 binds to the 30S ribosomal subunit and shifts the equilibrium between 70S ribosomes and their 50S and 30S subunits in favor of the free subunits, thus enhancing the availability of 30S subunits on which protein synthesis initiation begins. The chain is Translation initiation factor IF-3 from Chlorobaculum tepidum (strain ATCC 49652 / DSM 12025 / NBRC 103806 / TLS) (Chlorobium tepidum).